The following is a 210-amino-acid chain: MDIVSIALPKGRMTEDAVVLFKKAGISNDVLKDISRKLILEDNKNAIKFMLVKPMDVPTYVEHGAADLGVCGKDILLEQKKDLYEVLDLKFGFCRMVVAGPPNVKDSFLTNKRVATKFPNVAEEFFKKKGENVEIIKLNGSVELAPIVGLSEVIVDIVETGRTLRENGLVVIEEIFPSTARLIVNKASMKTKSERIKDIILKLREVINGG.

The protein belongs to the ATP phosphoribosyltransferase family. Short subfamily. Heteromultimer composed of HisG and HisZ subunits.

It is found in the cytoplasm. It catalyses the reaction 1-(5-phospho-beta-D-ribosyl)-ATP + diphosphate = 5-phospho-alpha-D-ribose 1-diphosphate + ATP. It functions in the pathway amino-acid biosynthesis; L-histidine biosynthesis; L-histidine from 5-phospho-alpha-D-ribose 1-diphosphate: step 1/9. In terms of biological role, catalyzes the condensation of ATP and 5-phosphoribose 1-diphosphate to form N'-(5'-phosphoribosyl)-ATP (PR-ATP). Has a crucial role in the pathway because the rate of histidine biosynthesis seems to be controlled primarily by regulation of HisG enzymatic activity. This Caldanaerobacter subterraneus subsp. tengcongensis (strain DSM 15242 / JCM 11007 / NBRC 100824 / MB4) (Thermoanaerobacter tengcongensis) protein is ATP phosphoribosyltransferase.